A 323-amino-acid chain; its full sequence is HTH-type transcriptional activator CmpR (323 aa).

Residues 4-61 form the HTH lysR-type domain; sequence LTLHQLKVFEAAARHSSFTRAAEELYLTQPTVSIQVKQLTKAVGLPLFEQIGKRLYLT. A DNA-binding region (H-T-H motif) is located at residues 21-40; that stretch reads FTRAAEELYLTQPTVSIQVK. The tract at residues 304 to 323 is disordered; that stretch reads IPESTTTDPELDAPQPVVGV.

It belongs to the LysR transcriptional regulatory family.

The protein resides in the cytoplasm. Functionally, activates transcription of the cmpABCD operon under carbon dioxide-limited conditions. In Synechococcus elongatus (strain ATCC 33912 / PCC 7942 / FACHB-805) (Anacystis nidulans R2), this protein is HTH-type transcriptional activator CmpR (cmpR).